Consider the following 218-residue polypeptide: Guanylate kinase (218 aa).

Positions 17–196 constitute a Guanylate kinase-like domain; sequence GVLLALSSPS…ALEKLNEILH (180 aa). 24–31 is a binding site for ATP; sequence SPSGAGKT.

This sequence belongs to the guanylate kinase family.

It is found in the cytoplasm. The catalysed reaction is GMP + ATP = GDP + ADP. Essential for recycling GMP and indirectly, cGMP. This is Guanylate kinase from Maricaulis maris (strain MCS10) (Caulobacter maris).